Reading from the N-terminus, the 133-residue chain is Small ribosomal subunit protein uS8 (133 aa).

It belongs to the universal ribosomal protein uS8 family. In terms of assembly, part of the 30S ribosomal subunit. Contacts proteins S5 and S12.

Its function is as follows. One of the primary rRNA binding proteins, it binds directly to 16S rRNA central domain where it helps coordinate assembly of the platform of the 30S subunit. In Orientia tsutsugamushi (strain Ikeda) (Rickettsia tsutsugamushi), this protein is Small ribosomal subunit protein uS8.